The primary structure comprises 117 residues: Non-specific lipid-transfer protein 1 (117 aa).

An N-terminal signal peptide occupies residues 1 to 26 (MARAQVLLMAAALVLMLTAAPRAAVA). 4 disulfide bridges follow: C29–C76, C39–C53, C54–C99, and C74–C113. D33 carries the Cis-14-hydroxy-10,13-dioxo-7-heptadecenoic acid aspartate ester lipid modification.

This sequence belongs to the plant LTP family. In terms of tissue distribution, aleurone layer of developing and germinating seeds.

Its function is as follows. Plant non-specific lipid-transfer proteins transfer phospholipids as well as galactolipids across membranes. May play a role in wax or cutin deposition in the cell walls of expanding epidermal cells and certain secretory tissues. The polypeptide is Non-specific lipid-transfer protein 1 (LTP1) (Hordeum vulgare (Barley)).